Here is a 236-residue protein sequence, read N- to C-terminus: Probable fimbrial chaperone EcpE (236 aa).

An N-terminal signal peptide occupies residues 1-27 (MFRRRGVTLTKALLTVVCMLAAPLTQA).

It belongs to the EcpB/EcpE family.

Part of the ecpRABCDE operon, which encodes the E.coli common pilus (ECP). ECP is found in both commensal and pathogenic strains and plays a dual role in early-stage biofilm development and host cell recognition. The protein is Probable fimbrial chaperone EcpE (ecpE) of Escherichia coli O18:K1:H7 (strain IHE3034 / ExPEC).